Here is a 335-residue protein sequence, read N- to C-terminus: Cut9-interacting protein scn1 (335 aa).

The protein belongs to the metallo-dependent hydrolases superfamily.

Functionally, interacts with cut9. This is Cut9-interacting protein scn1 (scn1) from Schizosaccharomyces pombe (strain 972 / ATCC 24843) (Fission yeast).